The following is a 207-amino-acid chain: Ribosome maturation factor RimP (207 aa).

Positions 171–207 are disordered; sequence RAPGGAPEEGEEDTTEAAPEGAGKSPKPGRRPARKTH. Basic residues predominate over residues 197–207; that stretch reads KPGRRPARKTH.

This sequence belongs to the RimP family.

It localises to the cytoplasm. Its function is as follows. Required for maturation of 30S ribosomal subunits. This chain is Ribosome maturation factor RimP, found in Gluconacetobacter diazotrophicus (strain ATCC 49037 / DSM 5601 / CCUG 37298 / CIP 103539 / LMG 7603 / PAl5).